The chain runs to 380 residues: MSQNKPAVNPPLWLLAELTYRCPLQCPYCSNPLDFARQEKELTTEQWIEVFRQARAMGSVQLGFSGGEPLTRKDLPELIRAARDLGFYTNLITSGIGLTESKLDAFSEAGLDHIQISFQASDEVLNAALAGNKKAFQQKLAMARAVKARDYPMVLNFVLHRHNIDQLDKIIELCIELEADDVELATCQFYGWAFLNREGLLPTREQIARAEQVVADYRQKMAASGNLTNLLFVTPDYYEERPKGCMGGWGSIFLSVTPEGTALPCHSARQLPVAFPSVLEQSLESIWYDSFGFNRYRGYDWMPEPCRSCDEKEKDFGGCRCQAFMLTGSADNADPVCSKSPHHHKILEARREAACSDIKVSQLQFRNRTRSQLIYKTREL.

Positions 8 to 223 (VNPPLWLLAE…VADYRQKMAA (216 aa)) constitute a Radical SAM core domain. [4Fe-4S] cluster contacts are provided by Cys22, Cys26, and Cys29.

It belongs to the radical SAM superfamily. PqqE family. Interacts with PqqD. The interaction is necessary for activity of PqqE. It depends on [4Fe-4S] cluster as a cofactor.

It catalyses the reaction [PQQ precursor protein] + S-adenosyl-L-methionine = E-Y cross-linked-[PQQ precursor protein] + 5'-deoxyadenosine + L-methionine + H(+). Its pathway is cofactor biosynthesis; pyrroloquinoline quinone biosynthesis. In terms of biological role, catalyzes the cross-linking of a glutamate residue and a tyrosine residue in the PqqA protein as part of the biosynthesis of pyrroloquinoline quinone (PQQ). The protein is PqqA peptide cyclase of Klebsiella pneumoniae (strain 342).